The sequence spans 173 residues: Superoxide dismutase [Cu-Zn] (173 aa).

The first 19 residues, 1-19 (MKSLFIASTMVLMAFPAFA), serve as a signal peptide directing secretion. Cu cation is bound by residues His-67, His-69, and His-92. Cys-74 and Cys-169 are oxidised to a cystine. His-92, His-101, His-109, and Asp-112 together coordinate Zn(2+). His-147 contributes to the Cu cation binding site.

Belongs to the Cu-Zn superoxide dismutase family. As to quaternary structure, homodimer. It depends on Cu cation as a cofactor. Zn(2+) is required as a cofactor.

It localises to the periplasm. The catalysed reaction is 2 superoxide + 2 H(+) = H2O2 + O2. In terms of biological role, destroys radicals which are normally produced within the cells and which are toxic to biological systems. The chain is Superoxide dismutase [Cu-Zn] (sodC) from Brucella abortus biovar 1 (strain 9-941).